Reading from the N-terminus, the 393-residue chain is Fasciculation and elongation protein zeta-1 (393 aa).

Residues Met1 to Pro41 are disordered. A Phosphoserine modification is found at Ser58. The tract at residues Asn130–Asp154 is disordered. Positions Ser231 to Ser299 form a coiled coil. Ser299 and Ser317 each carry phosphoserine.

It belongs to the zygin family. Homodimer. Interacts with UBE4B and SAP30L. Interacts with SCOC and ULK1; SCOC interferes with ULK1-binding to FEZ1. Directly interacts with SCOC and UVRAG. Stabilizes the interaction between SCOC and UVRAG during amino acid starvation. Interacts with the NH2-terminal variable region (V1) of PKC zeta and weakly with that of PKC epsilon. Phosphorylated by protein kinase C zeta; which enhances interaction with UBE4B and polyubiquitination. In terms of processing, polyubiquitinated in a UBE4B-dependent manner; which does not lead to proteasomal degradation and may be important for neurogenic activity. Polyubiquitin linkage seems to be mainly through Lys-26. Brain.

It localises to the cytoplasm. Its subcellular location is the cytoskeleton. The protein localises to the microtubule organizing center. It is found in the centrosome. The protein resides in the cell membrane. Functionally, may be involved in axonal outgrowth as component of the network of molecules that regulate cellular morphology and axon guidance machinery. May participate in the transport of mitochondria and other cargos along microtubules. This is Fasciculation and elongation protein zeta-1 (Fez1) from Rattus norvegicus (Rat).